Reading from the N-terminus, the 216-residue chain is MSKLQSEVLKEAISQVVGESKEKGRKFTETVELQIGLKNYDPQKDKRFSGSVKLPHIPRPKMKVCMLGDAQHVEEAEKIGLDYMDVEALKKMNKNKKLVKKLAKKYHAFLASEAIIKQIPRLLGPGLNKAGKFPTLVTHQESLESKVNETKATVKFQLKKVLCMGVAVGNLSMEEKQIQQNIQMSVNFLVSLLKKNWQNVRCLYIKSTMGKPIRVF.

Belongs to the universal ribosomal protein uL1 family.

The polypeptide is Large ribosomal subunit protein uL1 (Oryza sativa subsp. indica (Rice)).